Here is a 249-residue protein sequence, read N- to C-terminus: tRNA (guanine-N(1)-)-methyltransferase (249 aa).

Residues glycine 113 and 133-138 (IGDFVV) each bind S-adenosyl-L-methionine.

This sequence belongs to the RNA methyltransferase TrmD family. As to quaternary structure, homodimer.

It localises to the cytoplasm. It carries out the reaction guanosine(37) in tRNA + S-adenosyl-L-methionine = N(1)-methylguanosine(37) in tRNA + S-adenosyl-L-homocysteine + H(+). In terms of biological role, specifically methylates guanosine-37 in various tRNAs. The protein is tRNA (guanine-N(1)-)-methyltransferase of Neisseria meningitidis serogroup C (strain 053442).